The primary structure comprises 202 residues: MENMAFNQRTVVMIGPGEHYVTAKNEVIKTLLGSCVAVCLYDPKAQVIGMNHFLLAADRRKFTHFLDSRAGYYGVHAMEILINAMLKRGAQRKYLQSKIFGGANVLSLCADNILNHYDIGGMNIDFVRHFLQRERIPIISEDIGGHCGRVIYFDPTDYSVYRSLIEHKYEEIASLQDEEYRYFNQASEDIHSSGVPVVIWSD.

It belongs to the CheD family.

It catalyses the reaction L-glutaminyl-[protein] + H2O = L-glutamyl-[protein] + NH4(+). In terms of biological role, probably deamidates glutamine residues to glutamate on methyl-accepting chemotaxis receptors (MCPs), playing an important role in chemotaxis. The sequence is that of Probable chemoreceptor glutamine deamidase CheD 2 from Shewanella oneidensis (strain ATCC 700550 / JCM 31522 / CIP 106686 / LMG 19005 / NCIMB 14063 / MR-1).